Here is a 103-residue protein sequence, read N- to C-terminus: MYAVIKTGGKQYKVAIGEKLKVEQIPADVDSQIVLEEVLMIADGEQVVVGAPLVSGATVKATVVSHGRGEKIRIFKMRRRKHYQKHQGHRQNYTEIRIDAISK.

The protein belongs to the bacterial ribosomal protein bL21 family. In terms of assembly, part of the 50S ribosomal subunit. Contacts protein L20.

This protein binds to 23S rRNA in the presence of protein L20. This Chromobacterium violaceum (strain ATCC 12472 / DSM 30191 / JCM 1249 / CCUG 213 / NBRC 12614 / NCIMB 9131 / NCTC 9757 / MK) protein is Large ribosomal subunit protein bL21.